We begin with the raw amino-acid sequence, 471 residues long: Serine hydroxymethyltransferase 4 (471 aa).

N-acetylmethionine is present on M1. S39 is a binding site for L-serine. 3 residues coordinate pemetrexed: S39, Y59, and E61. E61 and Y69 together coordinate L-serine. Pemetrexed is bound by residues 105–107 (SGS), H134, S190, and H218. H218 and K244 together coordinate L-serine. The residue at position 244 (K244) is an N6-(pyridoxal phosphate)lysine. Pemetrexed is bound at residue G290. K373 is a binding site for methotrexate. An L-serine-binding site is contributed by R389. R389 contacts pemetrexed.

It belongs to the SHMT family. Homotetramer. Interacts with UBP16. Requires pyridoxal 5'-phosphate as cofactor. In terms of tissue distribution, mostly expressed in flowers, less abundant in roots, inflorescence stems, and siliques, and barely detectable in leaves.

The protein localises to the cytoplasm. The catalysed reaction is (6R)-5,10-methylene-5,6,7,8-tetrahydrofolate + glycine + H2O = (6S)-5,6,7,8-tetrahydrofolate + L-serine. It participates in one-carbon metabolism; tetrahydrofolate interconversion. Its activity is regulated as follows. Inhibited by the antifolate drugs methotrexate and pemetrexed. Catalyzes the interconversion of serine and glycine with the conversion of tetrahydrofolate (THF) into 5,10-methylene-THF. The protein is Serine hydroxymethyltransferase 4 of Arabidopsis thaliana (Mouse-ear cress).